The chain runs to 505 residues: uncharacterized protein (505 aa).

14 consecutive transmembrane segments (helical) span residues 9–29 (ANLT…PFIV), 49–69 (YFSV…SVAA), 86–106 (AASV…AFFI), 122–142 (LSIL…GFGA), 156–176 (IQAV…ACFA), 181–201 (QIQL…FYFF), 235–255 (IGVL…LGAS), 261–281 (AAII…ASLF), 310–330 (LLLA…LTIW), 341–361 (LLFI…LFYI), 371–391 (PAIV…TLSG), 395–415 (LGLY…NAIF), 435–455 (IIGP…IQFI), and 464–484 (LIAT…MLVC).

The protein localises to the cell membrane. May be involved in the production of the exopolysaccharide (EPS) component of the extracellular matrix during biofilm formation. EPS is responsible for the adhesion of chains of cells into bundles. This is an uncharacterized protein from Bacillus subtilis (strain 168).